Consider the following 523-residue polypeptide: MLQEDKRELSESYFSKERLAEHHFRSYNAFLEHGMQDVVTEKERIETDIGDKEDEEPVWVELGDVRAVTPRVREADGSEELLYPQEARLRNITYSAPVFMEMSIVRGGEEEEERVLDTTETKVGRMPIMVGSDKCNISGFSDEELIEIGEDPADPGGYFIINGSERVLMTSEDLAPNKILAEYDSKYGDEIQVAKTFSQRRGYRALVLVERNREGLLEVSFPSVSGSISFVTLVRALGLESDEEIVHRVSEDPEIVKFMLENLEEADVQTQEEAIEDLGQRVASGQGKNYQLKRANYVIDRYLLPHLHEDGVEEEETRINKAYYLCRMAEACFELALGRREADDKDHYANKRLKVSGDLMKDLFRTALNKLARDVKYQLERANMRNRELTVNTVVRSDVLTERLEHPIATGNWVGGRSGVSQLVDRTDFMGVLSHLRRLRSPLSRSQPHFEARDLHATQWGRICPSETPEGPNCGLVKNFAQAMELSQDVDDERDLKQELSSMGVEGIPGISMETTSTTSADD.

Positions 501–523 (SSMGVEGIPGISMETTSTTSADD) are disordered. Residues 513-523 (METTSTTSADD) are compositionally biased toward polar residues.

It belongs to the RNA polymerase beta chain family. Part of the RNA polymerase complex.

It is found in the cytoplasm. It carries out the reaction RNA(n) + a ribonucleoside 5'-triphosphate = RNA(n+1) + diphosphate. Functionally, DNA-dependent RNA polymerase (RNAP) catalyzes the transcription of DNA into RNA using the four ribonucleoside triphosphates as substrates. The Rpo2 subunit (Rpo2N and Rpo2C in this organism) is implicated in DNA promoter recognition and in nucleotide binding. The sequence is that of DNA-directed RNA polymerase subunit Rpo2N from Halobacterium salinarum (strain ATCC 29341 / DSM 671 / R1).